The chain runs to 358 residues: Nitric oxide synthase oxygenase (358 aa).

Residue cysteine 62 coordinates heme.

This sequence belongs to the NOS family. Bacterial NOS oxygenase subfamily. As to quaternary structure, homodimer. Heme is required as a cofactor. (6S)-5,6,7,8-tetrahydrofolate serves as cofactor.

The catalysed reaction is 3 reduced [flavodoxin] + 2 L-arginine + 4 O2 = 3 oxidized [flavodoxin] + 2 L-citrulline + 2 nitric oxide + 4 H2O + 5 H(+). Catalyzes the production of nitric oxide. This Staphylococcus aureus (strain MRSA252) protein is Nitric oxide synthase oxygenase (nos).